We begin with the raw amino-acid sequence, 837 residues long: Ubiquitin carboxyl-terminal hydrolase A (837 aa).

The UBP-type; degenerate zinc-finger motif lies at 166 to 277 (PSAFAESIIQ…QHLTHWGLNP (112 aa)). The USP domain occupies 319–835 (TGIENLGNSC…LGYIYFYKRQ (517 aa)). The active-site Nucleophile is C328. Residues 628–669 (SFNQEVLDTLLSMDFPLVRCKKALLATGGKDAELAMNWIFEH) enclose the UBA 1 domain. The tract at residues 676-695 (DIEQTPVNNNNNNNNSSNSN) is disordered. The segment covering 683-695 (NNNNNNNNSSNSN) has biased composition (low complexity). The region spanning 700-740 (VFNSQDVDNIIGMGFTDSQAKLALKNTKGNLERAADWLFSH) is the UBA 2 domain. Residue H797 is the Proton acceptor of the active site.

This sequence belongs to the peptidase C19 family.

It catalyses the reaction Thiol-dependent hydrolysis of ester, thioester, amide, peptide and isopeptide bonds formed by the C-terminal Gly of ubiquitin (a 76-residue protein attached to proteins as an intracellular targeting signal).. Functionally, required for development but not growth. The chain is Ubiquitin carboxyl-terminal hydrolase A (ubpA) from Dictyostelium discoideum (Social amoeba).